The sequence spans 743 residues: Catalase-peroxidase (743 aa).

Residues 1–29 (MNAESGENAGGGCPLGHGAGAPRKRPSNR) are disordered. A compositionally biased stretch (gly residues) spans 8–19 (NAGGGCPLGHGA). Positions 100–222 (WHSAGTYRIT…LGAVQMGLIY (123 aa)) form a cross-link, tryptophyl-tyrosyl-methioninium (Trp-Tyr) (with M-248). The active-site Proton acceptor is H101. Residues 222-248 (YVNPEGPNGNPDPKAAAVDIRETFARM) constitute a cross-link (tryptophyl-tyrosyl-methioninium (Tyr-Met) (with W-100)). Residue H263 participates in heme b binding.

The protein belongs to the peroxidase family. Peroxidase/catalase subfamily. Homodimer or homotetramer. Heme b is required as a cofactor. Post-translationally, formation of the three residue Trp-Tyr-Met cross-link is important for the catalase, but not the peroxidase activity of the enzyme.

The enzyme catalyses H2O2 + AH2 = A + 2 H2O. It carries out the reaction 2 H2O2 = O2 + 2 H2O. Its function is as follows. Bifunctional enzyme with both catalase and broad-spectrum peroxidase activity. The sequence is that of Catalase-peroxidase from Stutzerimonas stutzeri (strain A1501) (Pseudomonas stutzeri).